Reading from the N-terminus, the 185-residue chain is Transcription termination/antitermination protein NusG (185 aa).

Residues 133-161 (PGEEVRVTEGPFADFNGTVEEVDYEKGRL) form the KOW domain.

The protein belongs to the NusG family.

In terms of biological role, participates in transcription elongation, termination and antitermination. The polypeptide is Transcription termination/antitermination protein NusG (Haemophilus influenzae (strain ATCC 51907 / DSM 11121 / KW20 / Rd)).